Consider the following 639-residue polypeptide: Protein phosphatase EYA4 (639 aa).

Methionine 1 carries the N-acetylmethionine modification. Disordered stretches follow at residues 1–72 (MEDS…GGEN), 210–232 (QTQSPLQSGCLSYSPGFSTPQPG), and 300–368 (ADGT…DSDL). Lysine 14 participates in a covalent cross-link: Glycyl lysine isopeptide (Lys-Gly) (interchain with G-Cter in SUMO2). Polar residues predominate over residues 18 to 30 (ESDVSQSQNSRSM). Residue lysine 52 forms a Glycyl lysine isopeptide (Lys-Gly) (interchain with G-Cter in SUMO2) linkage. Low complexity predominate over residues 56 to 66 (SNLSSTSVTTN). Residues 300–334 (ADGTPSSTSTYQLQESLPGLTNQPGEFDTMQSPST) show a composition bias toward polar residues. Phosphoserine is present on serine 361. Aspartate 375 functions as the Nucleophile in the catalytic mechanism. Positions 375, 377, and 603 each coordinate Mg(2+). The active-site Proton donor is the aspartate 377.

Belongs to the HAD-like hydrolase superfamily. EYA family. As to quaternary structure, interacts with SIX3; translocates EYA4 from the cytoplasm to the nucleus and promotes activation of their target genes. Mg(2+) is required as a cofactor. In terms of tissue distribution, highly expressed in heart and skeletal muscle.

It is found in the cytoplasm. The protein resides in the nucleus. It carries out the reaction O-phospho-L-tyrosyl-[protein] + H2O = L-tyrosyl-[protein] + phosphate. Tyrosine phosphatase that specifically dephosphorylates 'Tyr-142' of histone H2AX (H2AXY142ph). 'Tyr-142' phosphorylation of histone H2AX plays a central role in DNA repair and acts as a mark that distinguishes between apoptotic and repair responses to genotoxic stress. Promotes efficient DNA repair by dephosphorylating H2AX, promoting the recruitment of DNA repair complexes containing MDC1. Its function as histone phosphatase probably explains its role in transcription regulation during organogenesis. May be involved in development of the eye. The protein is Protein phosphatase EYA4 (EYA4) of Homo sapiens (Human).